An 89-amino-acid chain; its full sequence is LYR motif-containing protein 4 (89 aa).

This sequence belongs to the complex I LYR family.

The protein resides in the mitochondrion. The protein localises to the nucleus. Its pathway is cofactor biosynthesis; iron-sulfur cluster biosynthesis. Required for nuclear and mitochondrial iron-sulfur protein biosynthesis. This Xenopus laevis (African clawed frog) protein is LYR motif-containing protein 4 (lyrm4).